The following is a 677-amino-acid chain: MAQATISITVNGEAKEVEATTTGVELFAEDKNIIAVKINGENRDLYTPLNDGDTVDPIALDSEDGLAIMRHSATHVMAQAVQEVYPNAKLGVGPVIKDGFYYDFQVDQPFTPDDLKDIEKRMQRIIKSSQSFRRRSVTEEEALKEEADQPFKIELIEDKEAHLDPAAATEISEKELSFYDNVDRDGNVVWKDLCRGPHLPNTRYIKAFKIERSAAAYWRGSEKNPTMQRIYGTAWATKEDLKAYQTRLEEAAKRDHRKLGAEMDLFSFPDEIGPGLAVFHPKGAAVINAMEDYSREMHRKHHYSFVQTPHITKGGLYETSGHLHWYKDGMYPPMHLDEEKDADGNITKPGADYYLKPMNCPMHNLIFKSRQRSYRELPLRLFEFGTVYRYEKSGEVHGLTRVRGLTQDDSHIYCTREQMKDELTSLLTFVLNLLKDFGLTDFYLELSTKDPNKYVGSDEIWEEATNTLAEVAKESNLELVDDPCGAAFYGPKISVQARDAIGRTWQVSTIQLDFNLPERFQLEYIAKDGTHQRPVMIHRALFGSIERFFAVLLEHYAGAFPAWLAPVQVLGVPVADEFAPHLAGFVKSLEDEMVRCEIDYSDDRFGKKIRNASKSKVPFILIVGEEDMNNNAVSFRFRDGSQLNGVPVDTAREQILTVIKKRVQVNSADDFNAAVAE.

The TGS domain maps to 1–59; the sequence is MAQATISITVNGEAKEVEATTTGVELFAEDKNIIAVKINGENRDLYTPLNDGDTVDPIA. Residues 255 to 561 are catalytic; the sequence is DHRKLGAEMD…LLEHYAGAFP (307 aa). 3 residues coordinate Zn(2+): Cys360, His411, and His538.

Belongs to the class-II aminoacyl-tRNA synthetase family. Homodimer. Zn(2+) serves as cofactor.

The protein resides in the cytoplasm. It catalyses the reaction tRNA(Thr) + L-threonine + ATP = L-threonyl-tRNA(Thr) + AMP + diphosphate + H(+). In terms of biological role, catalyzes the attachment of threonine to tRNA(Thr) in a two-step reaction: L-threonine is first activated by ATP to form Thr-AMP and then transferred to the acceptor end of tRNA(Thr). Also edits incorrectly charged L-seryl-tRNA(Thr). The protein is Threonine--tRNA ligase of Bifidobacterium longum (strain DJO10A).